Reading from the N-terminus, the 312-residue chain is 2,3-dihydroxyphenylpropionate/2,3-dihydroxicinnamic acid 1,2-dioxygenase 1 (312 aa).

Residue histidine 115 is the Proton donor of the active site. Histidine 179 acts as the Proton acceptor in catalysis.

This sequence belongs to the LigB/MhpB extradiol dioxygenase family. As to quaternary structure, homotetramer. Requires Fe(2+) as cofactor.

It carries out the reaction 3-(2,3-dihydroxyphenyl)propanoate + O2 = (2Z,4E)-2-hydroxy-6-oxonona-2,4-dienedioate + H(+). The enzyme catalyses (2E)-3-(2,3-dihydroxyphenyl)prop-2-enoate + O2 = (2Z,4E,7E)-2-hydroxy-6-oxonona-2,4,7-trienedioate + H(+). Its pathway is aromatic compound metabolism; 3-phenylpropanoate degradation. In terms of biological role, catalyzes the non-heme iron(II)-dependent oxidative cleavage of 2,3-dihydroxyphenylpropionic acid and 2,3-dihydroxicinnamic acid into 2-hydroxy-6-ketononadienedioate and 2-hydroxy-6-ketononatrienedioate, respectively. This chain is 2,3-dihydroxyphenylpropionate/2,3-dihydroxicinnamic acid 1,2-dioxygenase 1, found in Dechloromonas aromatica (strain RCB).